The sequence spans 381 residues: Sulfate/thiosulfate import ATP-binding protein CysA (381 aa).

Residues 3–233 (ILVYEVSKSL…PIDYFVGIFS (231 aa)) form the ABC transporter domain. 35 to 42 (GPSGSGKS) is a binding site for ATP.

The protein belongs to the ABC transporter superfamily. Sulfate/tungstate importer (TC 3.A.1.6) family.

The protein resides in the plastid. The protein localises to the chloroplast. The enzyme catalyses sulfate(out) + ATP + H2O = sulfate(in) + ADP + phosphate + H(+). It carries out the reaction thiosulfate(out) + ATP + H2O = thiosulfate(in) + ADP + phosphate + H(+). In terms of biological role, part of the ABC transporter complex involved in sulfate/thiosulfate import. Responsible for energy coupling to the transport system. The sequence is that of Sulfate/thiosulfate import ATP-binding protein CysA from Anthoceros angustus (Hornwort).